The sequence spans 271 residues: Hydroxyethylthiazole kinase (271 aa).

Methionine 50 is a binding site for substrate. Residues arginine 126 and threonine 172 each contribute to the ATP site. Glycine 199 contributes to the substrate binding site.

Belongs to the Thz kinase family. Requires Mg(2+) as cofactor.

It carries out the reaction 5-(2-hydroxyethyl)-4-methylthiazole + ATP = 4-methyl-5-(2-phosphooxyethyl)-thiazole + ADP + H(+). The protein operates within cofactor biosynthesis; thiamine diphosphate biosynthesis; 4-methyl-5-(2-phosphoethyl)-thiazole from 5-(2-hydroxyethyl)-4-methylthiazole: step 1/1. Functionally, catalyzes the phosphorylation of the hydroxyl group of 4-methyl-5-beta-hydroxyethylthiazole (THZ). The sequence is that of Hydroxyethylthiazole kinase from Akkermansia muciniphila (strain ATCC BAA-835 / DSM 22959 / JCM 33894 / BCRC 81048 / CCUG 64013 / CIP 107961 / Muc).